The following is a 261-amino-acid chain: 3-deoxy-manno-octulosonate cytidylyltransferase (261 aa).

Belongs to the KdsB family.

It is found in the cytoplasm. The catalysed reaction is 3-deoxy-alpha-D-manno-oct-2-ulosonate + CTP = CMP-3-deoxy-beta-D-manno-octulosonate + diphosphate. Its pathway is nucleotide-sugar biosynthesis; CMP-3-deoxy-D-manno-octulosonate biosynthesis; CMP-3-deoxy-D-manno-octulosonate from 3-deoxy-D-manno-octulosonate and CTP: step 1/1. It participates in bacterial outer membrane biogenesis; lipopolysaccharide biosynthesis. Activates KDO (a required 8-carbon sugar) for incorporation into bacterial lipopolysaccharide in Gram-negative bacteria. This Marinobacter nauticus (strain ATCC 700491 / DSM 11845 / VT8) (Marinobacter aquaeolei) protein is 3-deoxy-manno-octulosonate cytidylyltransferase.